The following is a 314-amino-acid chain: MQTHDGKTAVAIIGSGNIGTDLMVKILRHGKHLRMGAFVGIDPESDGLKRAERMGVPTVSTGIEGLLSHPDFGSIGFVFDATSAGAHARHEQLLRPHGVRVIDLTPAAIGPFVVPAVNIEQHLDAPNVNMVTCGGQATIPMVAAVSRVVPVEYAEIVASISSRSAGPGTRANIDEFTETTSNAIVRVGGAQRGKAIIILNPAEPPLIMRDTVYCLVPGHADRQAIVESVERMASAVAAYVPGYRLKQTVQFDEFKGRMPQETGSAQAPRLKVSVFLEVEGAGHYLPSYAGNLDIMTSAALATAERIAARQPVAA.

15–18 contributes to the NAD(+) binding site; it reads SGNI. Residue cysteine 133 is the Acyl-thioester intermediate of the active site. NAD(+) is bound by residues 164–172 and asparagine 291; that span reads SAGPGTRAN.

The protein belongs to the acetaldehyde dehydrogenase family.

The enzyme catalyses acetaldehyde + NAD(+) + CoA = acetyl-CoA + NADH + H(+). In Pseudomonas putida (strain ATCC 700007 / DSM 6899 / JCM 31910 / BCRC 17059 / LMG 24140 / F1), this protein is Acetaldehyde dehydrogenase 2.